The chain runs to 160 residues: ATP synthase subunit b (160 aa).

The chain crosses the membrane as a helical span at residues 15-35 (LVIVIGLLFWFLRGFLGGILE).

The protein belongs to the ATPase B chain family. In terms of assembly, F-type ATPases have 2 components, F(1) - the catalytic core - and F(0) - the membrane proton channel. F(1) has five subunits: alpha(3), beta(3), gamma(1), delta(1), epsilon(1). F(0) has four main subunits: a(1), b(1), b'(1) and c(10-14). The alpha and beta chains form an alternating ring which encloses part of the gamma chain. F(1) is attached to F(0) by a central stalk formed by the gamma and epsilon chains, while a peripheral stalk is formed by the delta, b and b' chains.

Its subcellular location is the cellular thylakoid membrane. In terms of biological role, f(1)F(0) ATP synthase produces ATP from ADP in the presence of a proton or sodium gradient. F-type ATPases consist of two structural domains, F(1) containing the extramembraneous catalytic core and F(0) containing the membrane proton channel, linked together by a central stalk and a peripheral stalk. During catalysis, ATP synthesis in the catalytic domain of F(1) is coupled via a rotary mechanism of the central stalk subunits to proton translocation. Component of the F(0) channel, it forms part of the peripheral stalk, linking F(1) to F(0). This is ATP synthase subunit b from Synechococcus sp. (strain CC9605).